The following is a 401-amino-acid chain: Glutamyl-tRNA reductase (401 aa).

Substrate contacts are provided by residues 49-52, serine 92, 97-99, and glutamine 103; these read TCNR and END. Cysteine 50 acts as the Nucleophile in catalysis. Residue 171–176 coordinates NADP(+); sequence GNGKMA.

It belongs to the glutamyl-tRNA reductase family. Homodimer.

It catalyses the reaction (S)-4-amino-5-oxopentanoate + tRNA(Glu) + NADP(+) = L-glutamyl-tRNA(Glu) + NADPH + H(+). It functions in the pathway porphyrin-containing compound metabolism; protoporphyrin-IX biosynthesis; 5-aminolevulinate from L-glutamyl-tRNA(Glu): step 1/2. Functionally, catalyzes the NADPH-dependent reduction of glutamyl-tRNA(Glu) to glutamate 1-semialdehyde (GSA). This is Glutamyl-tRNA reductase from Picrophilus torridus (strain ATCC 700027 / DSM 9790 / JCM 10055 / NBRC 100828 / KAW 2/3).